A 282-amino-acid polypeptide reads, in one-letter code: Homeobox protein Hox-C12 (282 aa).

Disordered regions lie at residues 94-129 (YYRE…PLEP) and 147-214 (GGDG…NSRS). The span at 162 to 175 (SCQSLESDSSSSLL) shows a compositional bias: low complexity. Positions 214–273 (SRKKRKPYSKLQLAELEGEFLVNEFITRQRRRELSDRLNLSDQQVKIWFQNRRMKKKRLL) form a DNA-binding region, homeobox.

This sequence belongs to the Abd-B homeobox family.

The protein localises to the nucleus. Its function is as follows. Sequence-specific transcription factor which is part of a developmental regulatory system that provides cells with specific positional identities on the anterior-posterior axis. The sequence is that of Homeobox protein Hox-C12 (HOXC12) from Homo sapiens (Human).